We begin with the raw amino-acid sequence, 342 residues long: S-adenosylmethionine:tRNA ribosyltransferase-isomerase (342 aa).

Belongs to the QueA family. In terms of assembly, monomer.

The protein resides in the cytoplasm. The catalysed reaction is 7-aminomethyl-7-carbaguanosine(34) in tRNA + S-adenosyl-L-methionine = epoxyqueuosine(34) in tRNA + adenine + L-methionine + 2 H(+). It functions in the pathway tRNA modification; tRNA-queuosine biosynthesis. In terms of biological role, transfers and isomerizes the ribose moiety from AdoMet to the 7-aminomethyl group of 7-deazaguanine (preQ1-tRNA) to give epoxyqueuosine (oQ-tRNA). The chain is S-adenosylmethionine:tRNA ribosyltransferase-isomerase from Streptococcus pyogenes serotype M12 (strain MGAS2096).